Consider the following 146-residue polypeptide: Large ribosomal subunit protein uL15 (146 aa).

A disordered region spans residues 1 to 54 (MTIKLHDLRPAPGSKTPRTRVGRGEGSKGKTAGRGTKGTKARKQVPTTFEGGQM).

It belongs to the universal ribosomal protein uL15 family. As to quaternary structure, part of the 50S ribosomal subunit.

Functionally, binds to the 23S rRNA. The polypeptide is Large ribosomal subunit protein uL15 (Mycobacterium ulcerans (strain Agy99)).